Here is an 83-residue protein sequence, read N- to C-terminus: Conotoxin MiEr92 (83 aa).

The first 22 residues, 1–22, serve as a signal peptide directing secretion; the sequence is MKLTCVLIVIMLFLTVCPLITA. A propeptide spanning residues 23–49 is cleaved from the precursor; that stretch reads DHSRDKQEHPAMRLKDRIRYLRRGKLT. Intrachain disulfides connect Cys52–Cys67, Cys59–Cys72, and Cys66–Cys81.

Belongs to the conotoxin O1 superfamily. In terms of tissue distribution, expressed by the venom duct.

Its subcellular location is the secreted. The polypeptide is Conotoxin MiEr92 (Conus miles (Soldier cone)).